The primary structure comprises 1173 residues: Pumilio homolog 2 (1173 aa).

5 disordered regions span residues Val-41 to Gly-68, Val-265 to Thr-296, Gln-480 to Ala-518, Leu-592 to Phe-662, and Pro-730 to Leu-759. The segment covering Thr-287 to Thr-296 has biased composition (polar residues). Low complexity predominate over residues Gln-480–Gln-492. A compositionally biased stretch (polar residues) spans Val-493–Ala-518. Low complexity predominate over residues Gln-606–Gln-622. Residues Pro-623 to Tyr-633 are compositionally biased toward polar residues. Residues Gly-634–Ser-657 are compositionally biased toward low complexity. Residues Gly-815–Tyr-1155 form the PUM-HD domain. Pumilio repeat units lie at residues Asp-835–Ser-870, Glu-871–Thr-906, Arg-907–Arg-942, Glu-943–Glu-978, Ala-979–Glu-1014, Glu-1015–Cys-1050, Glu-1051–Asp-1086, Glu-1087–His-1129, and Lys-1130–Gly-1167. Positions Ser-850–Gln-854 are adenine-nucleotide binding in RNA target. The interval Asn-886 to Gln-890 is uracil-nucleotide binding in RNA target. Residues Cys-922–Gln-926 are adenine-nucleotide binding in RNA target. The interval Asn-958–Gln-962 is non-specific-nucleotide binding in RNA target. The tract at residues Cys-994–Gln-998 is adenine-nucleotide binding in RNA target. Residues Asn-1030 to Gln-1034 are uracil-nucleotide binding in RNA target. The guanine-nucleotide binding in RNA target stretch occupies residues Ser-1066 to Glu-1070. A uracil-nucleotide binding in RNA target region spans residues Asn-1109 to Gln-1113.

As to quaternary structure, component of a complex with papd4, sympk, tacc3, parn, dazl and cpeb1. In terms of processing, phosphorylated.

The protein localises to the cytoplasm. It is found in the P-body. Its subcellular location is the cytoplasmic granule. Its function is as follows. Sequence-specific RNA-binding protein that acts as a post-transcriptional repressor by binding the 3'-UTR of mRNA targets. Binds to an RNA consensus sequence, the Pumilio Response Element (PRE), 5'-UGUANAUA-3', that is related to the Nanos Response Element (NRE). Mediates post-transcriptional repression of transcripts via different mechanisms: acts via direct recruitment of deadenylase complexes leading to translational inhibition and mRNA degradation. Also mediates deadenylation-independent repression by promoting accessibility of miRNAs. The protein is Pumilio homolog 2 (pum2) of Xenopus laevis (African clawed frog).